The chain runs to 153 residues: MATKIRLKRQGKKFYAFYRVVVVDSRKKRDGKVIEEIGTYNPNTQPSTIQIKSDRAQYWLGVGAQPSEPVFKLLNITGDWQKYKGLEGAEGTLKTVEAGPDAEARIAAVEDQAQKLKAAKSEAAAKAKAEAEAAAAAEEAPAEEAAEEAPAEA.

Positions Glu-130–Ala-153 are disordered. The segment covering Ala-140–Ala-153 has biased composition (acidic residues).

This sequence belongs to the bacterial ribosomal protein bS16 family.

This Bifidobacterium longum (strain NCC 2705) protein is Small ribosomal subunit protein bS16.